The sequence spans 591 residues: MSLDFRNINTLWSSVIVETLHRLGLTTAIICPGSRSTPLAIAFAEHPHITAIPILDERSAAFFALGIAKRTQTPTAMVCTSGTAGANFYPTVIEARESRVPLLIFTADRPPELRHCRAGQAIDQIKLYGNYPNWQTELAIPAPEMGLFRYLRQTIIHGWERSHFPTAGVVHFNCPFREPLAPIIQPEIKELVTNFENNRFFESVKPLQPNLTVPCLSLPPQWLTKKRGIIIAGVAHPKDPELYCQAIANLATFLNYPVLTEALSPVRNFAHLNPNLITTYDLLLRNKELAQNLTPDLVIQIGDFPTSKELRNWLETLEPDHWIIDPSAENSDPLHNKTTYLRLSIESFKLEQSKCIEEKNNKSSWLKTWQIIDQKIREEINLTLESVDFLLEGKVSWLLSQILPPKTPIFIANSMSVRNAEFFWQPNNHQIIPYCNRGANGIDGTLSTALGMAYQAQSSVMLTGDLALIHDTNGFLINPHFRGHLTIILINNNGGGIFEMLPISDFNPLFEAFFATPQNLDFSQLCQTYKIPYQKIRDWPQIEKLLKPLPKAGIRILEVQTDRKKDAVWLKKMLSELAKRVDFRSEELSEN.

This sequence belongs to the TPP enzyme family. MenD subfamily. As to quaternary structure, homodimer. Mg(2+) is required as a cofactor. It depends on Mn(2+) as a cofactor. The cofactor is thiamine diphosphate.

The catalysed reaction is isochorismate + 2-oxoglutarate + H(+) = 5-enolpyruvoyl-6-hydroxy-2-succinyl-cyclohex-3-ene-1-carboxylate + CO2. Its pathway is quinol/quinone metabolism; 1,4-dihydroxy-2-naphthoate biosynthesis; 1,4-dihydroxy-2-naphthoate from chorismate: step 2/7. The protein operates within cofactor biosynthesis; phylloquinone biosynthesis. Catalyzes the thiamine diphosphate-dependent decarboxylation of 2-oxoglutarate and the subsequent addition of the resulting succinic semialdehyde-thiamine pyrophosphate anion to isochorismate to yield 2-succinyl-5-enolpyruvyl-6-hydroxy-3-cyclohexene-1-carboxylate (SEPHCHC). This is 2-succinyl-5-enolpyruvyl-6-hydroxy-3-cyclohexene-1-carboxylate synthase from Rippkaea orientalis (strain PCC 8801 / RF-1) (Cyanothece sp. (strain PCC 8801)).